Consider the following 152-residue polypeptide: MVELTEIKDDVVQLDEPQFSRNQAIVEEKASATNNDVVDDEDDSDSDFEDEFDENETLLDRIVALKDIVPPGKRQTISNFFGFTSSFVRNAFTKSGNLAWTLTTTALLLGVPLSLSILAEQQLIEMEKTFDLQSDANNILAQGEKDAAATAN.

Over 2–97 (VELTEIKDDV…VRNAFTKSGN (96 aa)) the chain is Cytoplasmic. Residues 27 to 49 (EEKASATNNDVVDDEDDSDSDFE) form a disordered region. Residues 37–49 (VVDDEDDSDSDFE) show a composition bias toward acidic residues. S44 and S46 each carry phosphoserine. A helical membrane pass occupies residues 98–119 (LAWTLTTTALLLGVPLSLSILA). Over 120-152 (EQQLIEMEKTFDLQSDANNILAQGEKDAAATAN) the chain is Mitochondrial intermembrane.

The protein belongs to the Tom22 family. In terms of assembly, forms part of the preprotein translocase complex of the outer mitochondrial membrane (TOM complex) which consists of at least 7 different proteins (TOM5, TOM6, TOM7, TOM20, TOM22, TOM40 and TOM70). Interacts with TOM20 and TOM70. Interacts with FCJ1.

The protein resides in the mitochondrion outer membrane. Central component of the TOM (translocase of outer membrane) receptor complex responsible for the recognition and translocation of cytosolically synthesized mitochondrial preproteins. Together with TOM20 and TOM70 functions as the transit peptide receptor at the surface of the mitochondrion outer membrane and facilitates the movement of preproteins into the TOM40 translocation pore. Docks TOM20 and TOM70 for interaction with the general TOM40 import pore (GIP) complex. May regulate the TOM machinery organization, stability and channel gating. In Saccharomyces cerevisiae (strain ATCC 204508 / S288c) (Baker's yeast), this protein is Mitochondrial import receptor subunit TOM22 (TOM22).